Reading from the N-terminus, the 502-residue chain is uncharacterized protein (502 aa).

The helical transmembrane segment at 1–21 (MKIFLVILSVFFFNGCFGLAY) threads the bilayer. 2 PLD phosphodiesterase domains span residues 162 to 189 (IKKRMHNKLFIVDNFAVIIGGRNIGDNY) and 396 to 423 (TKHSLHGKTIVFDDALTLLGSFNIDPRS).

Belongs to the phospholipase D family. Cardiolipin synthase subfamily.

It localises to the cell membrane. This is an uncharacterized protein from Helicobacter pylori (strain J99 / ATCC 700824) (Campylobacter pylori J99).